Here is a 186-residue protein sequence, read N- to C-terminus: PRA1 family protein G2 (186 aa).

A run of 4 helical transmembrane segments spans residues 66 to 86 (YFFV…LITA), 87 to 107 (SPVA…FHFF), 119 to 139 (VGDR…IWFT), and 142 to 162 (AVNL…HAVF).

Belongs to the PRA1 family. Expressed in roots and trichomes.

It is found in the endoplasmic reticulum membrane. In terms of biological role, may be involved in both secretory and endocytic intracellular trafficking in the endosomal/prevacuolar compartments. The polypeptide is PRA1 family protein G2 (PRA1G2) (Arabidopsis thaliana (Mouse-ear cress)).